A 485-amino-acid polypeptide reads, in one-letter code: Aspartyl/glutamyl-tRNA(Asn/Gln) amidotransferase subunit B (485 aa).

The protein belongs to the GatB/GatE family. GatB subfamily. In terms of assembly, heterotrimer of A, B and C subunits.

The catalysed reaction is L-glutamyl-tRNA(Gln) + L-glutamine + ATP + H2O = L-glutaminyl-tRNA(Gln) + L-glutamate + ADP + phosphate + H(+). The enzyme catalyses L-aspartyl-tRNA(Asn) + L-glutamine + ATP + H2O = L-asparaginyl-tRNA(Asn) + L-glutamate + ADP + phosphate + 2 H(+). Its function is as follows. Allows the formation of correctly charged Asn-tRNA(Asn) or Gln-tRNA(Gln) through the transamidation of misacylated Asp-tRNA(Asn) or Glu-tRNA(Gln) in organisms which lack either or both of asparaginyl-tRNA or glutaminyl-tRNA synthetases. The reaction takes place in the presence of glutamine and ATP through an activated phospho-Asp-tRNA(Asn) or phospho-Glu-tRNA(Gln). This is Aspartyl/glutamyl-tRNA(Asn/Gln) amidotransferase subunit B from Rhodospirillum rubrum (strain ATCC 11170 / ATH 1.1.1 / DSM 467 / LMG 4362 / NCIMB 8255 / S1).